Here is a 269-residue protein sequence, read N- to C-terminus: ParA family protein MG470 (269 aa).

It belongs to the ParA family.

The chain is ParA family protein MG470 from Mycoplasma genitalium (strain ATCC 33530 / DSM 19775 / NCTC 10195 / G37) (Mycoplasmoides genitalium).